The sequence spans 595 residues: Zinc finger protein 467 (595 aa).

The interval 1-67 is disordered; the sequence is MRETLEALSS…EEGAHTEQAE (67 aa). Lys97 is covalently cross-linked (Glycyl lysine isopeptide (Lys-Gly) (interchain with G-Cter in SUMO2)). 6 C2H2-type zinc fingers span residues 160–182, 188–210, 216–238, 244–266, 272–294, and 300–322; these read YGCG…QRLH, CACP…QRSH, FPCS…LRTH, YPCA…QKTH, FPCT…QRIH, and YQCA…QRVH. The interval 313 to 350 is disordered; sequence QHLVRHQRVHQTAGPARPSPDSSASPHSTAPSPTPSFP. The span at 325 to 343 shows a compositional bias: low complexity; that stretch reads AGPARPSPDSSASPHSTAP. C2H2-type zinc fingers lie at residues 355–377, 431–453, 459–481, 487–509, 515–537, and 543–565; these read FACS…QCLH, FFCP…PRVH, FACT…SRAH, FACA…QAVH, HACA…QAIH, and FSCP…QLIH. Lys368 is covalently cross-linked (Glycyl lysine isopeptide (Lys-Gly) (interchain with G-Cter in SUMO2)).

The protein belongs to the krueppel C2H2-type zinc-finger protein family. In terms of assembly, interacts with STAT3. Enhances STAT3 activity by keeping it in the nucleus.

It localises to the nucleus. Its function is as follows. Transcription factor that promotes adipocyte differentiation and suppresses osteoblast differentiation in the bone marrow. Enhances the osteoclast-supporting ability of stromal cells. Binds with STAT3 the consensus sequence 5'-CTTCTGGGAAGA-3' of the acute phase response element (APRE). Transactivates several promoters including FOS, OSM and PPARG. Recruits a histone deacetylase complex. The polypeptide is Zinc finger protein 467 (ZNF467) (Homo sapiens (Human)).